Here is a 137-residue protein sequence, read N- to C-terminus: Nucleoside diphosphate kinase (137 aa).

6 residues coordinate ATP: lysine 9, phenylalanine 57, arginine 85, threonine 91, arginine 102, and asparagine 112. Histidine 115 serves as the catalytic Pros-phosphohistidine intermediate.

It belongs to the NDK family. As to quaternary structure, homotetramer. Requires Mg(2+) as cofactor.

The protein resides in the cytoplasm. It carries out the reaction a 2'-deoxyribonucleoside 5'-diphosphate + ATP = a 2'-deoxyribonucleoside 5'-triphosphate + ADP. The enzyme catalyses a ribonucleoside 5'-diphosphate + ATP = a ribonucleoside 5'-triphosphate + ADP. In terms of biological role, major role in the synthesis of nucleoside triphosphates other than ATP. The ATP gamma phosphate is transferred to the NDP beta phosphate via a ping-pong mechanism, using a phosphorylated active-site intermediate. The protein is Nucleoside diphosphate kinase of Helicobacter hepaticus (strain ATCC 51449 / 3B1).